The primary structure comprises 289 residues: 7-methylguanosine phosphate-specific 5'-nucleotidase (289 aa).

Catalysis depends on D38, which acts as the Nucleophile. Mg(2+)-binding residues include D38 and D40. The Proton donor role is filled by D40. E85 serves as a coordination point for CMP. E85 contributes to the N(7)-methyl-GMP binding site. Substrate-binding positions include 153–154 and K202; that span reads SA. D227 is a binding site for Mg(2+).

Belongs to the pyrimidine 5'-nucleotidase family. In terms of assembly, monomer.

It is found in the cytoplasm. It carries out the reaction N(7)-methyl-GMP + H2O = N(7)-methylguanosine + phosphate. It catalyses the reaction CMP + H2O = cytidine + phosphate. The catalysed reaction is a ribonucleoside 5'-phosphate + H2O = a ribonucleoside + phosphate. Its function is as follows. Specifically hydrolyzes 7-methylguanosine monophosphate (m(7)GMP) to 7-methylguanosine and inorganic phosphate. The specific activity for m(7)GMP may protect cells against undesired salvage of m(7)GMP and its incorporation into nucleic acids. Also has weak activity for CMP. UMP and purine nucleotides are poor substrates. In Gallus gallus (Chicken), this protein is 7-methylguanosine phosphate-specific 5'-nucleotidase (NT5C3B).